A 448-amino-acid polypeptide reads, in one-letter code: Na(+)-translocating NADH-quinone reductase subunit A (448 aa).

The protein belongs to the NqrA family. In terms of assembly, composed of six subunits; NqrA, NqrB, NqrC, NqrD, NqrE and NqrF.

The catalysed reaction is a ubiquinone + n Na(+)(in) + NADH + H(+) = a ubiquinol + n Na(+)(out) + NAD(+). NQR complex catalyzes the reduction of ubiquinone-1 to ubiquinol by two successive reactions, coupled with the transport of Na(+) ions from the cytoplasm to the periplasm. NqrA to NqrE are probably involved in the second step, the conversion of ubisemiquinone to ubiquinol. This chain is Na(+)-translocating NADH-quinone reductase subunit A, found in Glaesserella parasuis serovar 5 (strain SH0165) (Haemophilus parasuis).